A 416-amino-acid chain; its full sequence is Serine hydroxymethyltransferase (416 aa).

(6S)-5,6,7,8-tetrahydrofolate-binding positions include Leu-117 and 121-123 (GHL). Lys-226 is modified (N6-(pyridoxal phosphate)lysine). Glu-242 lines the (6S)-5,6,7,8-tetrahydrofolate pocket.

The protein belongs to the SHMT family. In terms of assembly, homodimer. Pyridoxal 5'-phosphate serves as cofactor.

It is found in the cytoplasm. The catalysed reaction is (6R)-5,10-methylene-5,6,7,8-tetrahydrofolate + glycine + H2O = (6S)-5,6,7,8-tetrahydrofolate + L-serine. Its pathway is one-carbon metabolism; tetrahydrofolate interconversion. The protein operates within amino-acid biosynthesis; glycine biosynthesis; glycine from L-serine: step 1/1. Functionally, catalyzes the reversible interconversion of serine and glycine with tetrahydrofolate (THF) serving as the one-carbon carrier. This reaction serves as the major source of one-carbon groups required for the biosynthesis of purines, thymidylate, methionine, and other important biomolecules. Also exhibits THF-independent aldolase activity toward beta-hydroxyamino acids, producing glycine and aldehydes, via a retro-aldol mechanism. This is Serine hydroxymethyltransferase from Endomicrobium trichonymphae.